Consider the following 231-residue polypeptide: U1 small nuclear ribonucleoprotein C-1 (231 aa).

Residues 4-36 (YYCDYCDTYLTHDSPSVRKQHNAGYKHKANVRT) form a Matrin-type zinc finger. Composition is skewed to pro residues over residues 117 to 127 (APGIPGYPGGP), 134 to 159 (GAPPGSMPQPGAPPGSMPQPGAPPGS), and 167 to 178 (LPRPPTLPPPTS). The tract at residues 117–231 (APGIPGYPGG…SYAQPSEGNH (115 aa)) is disordered. Residues 181–193 (PGAPIPNSAAPPA) are compositionally biased toward low complexity. A compositionally biased stretch (pro residues) spans 199–217 (PPAPAGPTSGAPPAPPTAP).

It belongs to the U1 small nuclear ribonucleoprotein C family. In terms of assembly, U1 snRNP is composed of the 7 core Sm proteins B/B', D1, D2, D3, E, F and G that assemble in a heptameric protein ring on the Sm site of the small nuclear RNA to form the core snRNP, and at least 3 U1 snRNP-specific proteins U1-70K, U1-A and U1-C. U1-C interacts with U1 snRNA and the 5' splice-site region of the pre-mRNA.

The protein localises to the nucleus. In terms of biological role, component of the spliceosomal U1 snRNP, which is essential for recognition of the pre-mRNA 5' splice-site and the subsequent assembly of the spliceosome. U1-C is directly involved in initial 5' splice-site recognition for both constitutive and regulated alternative splicing. The interaction with the 5' splice-site seems to precede base-pairing between the pre-mRNA and the U1 snRNA. Stimulates commitment or early (E) complex formation by stabilizing the base pairing of the 5' end of the U1 snRNA and the 5' splice-site region. The sequence is that of U1 small nuclear ribonucleoprotein C-1 from Sorghum bicolor (Sorghum).